The chain runs to 237 residues: Sugar fermentation stimulation protein homolog (237 aa).

The protein belongs to the SfsA family.

The polypeptide is Sugar fermentation stimulation protein homolog (Pseudomonas syringae pv. syringae (strain B728a)).